Here is a 280-residue protein sequence, read N- to C-terminus: Putative pyruvate, phosphate dikinase regulatory protein (280 aa).

158 to 165 (GVSRTSKT) serves as a coordination point for ADP.

This sequence belongs to the pyruvate, phosphate/water dikinase regulatory protein family. PDRP subfamily.

It carries out the reaction N(tele)-phospho-L-histidyl/L-threonyl-[pyruvate, phosphate dikinase] + ADP = N(tele)-phospho-L-histidyl/O-phospho-L-threonyl-[pyruvate, phosphate dikinase] + AMP + H(+). It catalyses the reaction N(tele)-phospho-L-histidyl/O-phospho-L-threonyl-[pyruvate, phosphate dikinase] + phosphate + H(+) = N(tele)-phospho-L-histidyl/L-threonyl-[pyruvate, phosphate dikinase] + diphosphate. Its function is as follows. Bifunctional serine/threonine kinase and phosphorylase involved in the regulation of the pyruvate, phosphate dikinase (PPDK) by catalyzing its phosphorylation/dephosphorylation. In Lactobacillus gasseri (strain ATCC 33323 / DSM 20243 / BCRC 14619 / CIP 102991 / JCM 1131 / KCTC 3163 / NCIMB 11718 / NCTC 13722 / AM63), this protein is Putative pyruvate, phosphate dikinase regulatory protein.